Here is an 82-residue protein sequence, read N- to C-terminus: Large ribosomal subunit protein bL31B-2 (82 aa).

This sequence belongs to the bacterial ribosomal protein bL31 family. Type B subfamily. Part of the 50S ribosomal subunit.

In Streptomyces avermitilis (strain ATCC 31267 / DSM 46492 / JCM 5070 / NBRC 14893 / NCIMB 12804 / NRRL 8165 / MA-4680), this protein is Large ribosomal subunit protein bL31B-2.